A 261-amino-acid polypeptide reads, in one-letter code: Yop proteins translocation protein T (261 aa).

Transmembrane regions (helical) follow at residues 20 to 40 (FMACFVILPVLSKQLLGGVLL), 44 to 64 (IVCSLALYVYPAVANQPYIEV), 77 to 97 (IILGLLIGFVATIPFWALESA), 131 to 151 (TLITIFFSGGAFLSLLSALFH), 180 to 200 (ILLIAAVLAAPLLIAMFLAEF), 214 to 234 (VFVLAMPIKSAIASLLLVIYC), and 239 to 259 (SHASKAMLLVMDPISLLIPVL).

It belongs to the FliR/MopE/SpaR family.

The protein localises to the cell membrane. Its function is as follows. Component of the yop secretion machinery. In Yersinia pestis, this protein is Yop proteins translocation protein T (yscT).